Reading from the N-terminus, the 575-residue chain is Cytochrome P450 monooxygenase opaB (575 aa).

Asn6 carries an N-linked (GlcNAc...) asparagine glycan. The chain crosses the membrane as a helical span at residues Phe37–Ser57. Asn83 and Asn242 each carry an N-linked (GlcNAc...) asparagine glycan. Cys521 lines the heme pocket.

This sequence belongs to the cytochrome P450 family. It depends on heme as a cofactor.

It is found in the membrane. The protein operates within secondary metabolite biosynthesis. Its function is as follows. Cytochrome P450 monooxygenase; part of the gene cluster that mediates the biosynthesis of oxepinamides, derivatives of anthranilyl-containing tripeptides that share an oxepin ring and a fused pyrimidinone moiety. The nonribosomal peptide synthetase (NRPS) opaA assembles the quinazolinone core with D-Phe incorporation. The first adenylation domain (A1) of opaA loads and activates anthranilic acid whereas the second A domain (A2) is for activating of L-Phe, which is then converted to D-form by the E domain. The third A domain (A3) is responsible for L-Ile activation and the terminal condensation domain C3 for cyclization and releasing the NRPS product protuboxepin K. The cytochrome P450 monooxygenase opaB then catalyzes alone the oxepin ring formation to convert protuboxepin K into protuboxepin A. The flavoenzyme opaC installs subsequently one hydroxyl group at the oxepin ring, accompanied by double bond migration, to form 15-epi-oxepinamide E. The epimerase opaE changes the D-Phe residue back to L-form, leading to oxepinamide E, which is further methylated at the hydroxyl group at C-12 by the O-methyltransferase OpaF to yield oxepinamide F. This is Cytochrome P450 monooxygenase opaB from Aspergillus ustus.